Consider the following 634-residue polypeptide: 1-deoxy-D-xylulose-5-phosphate synthase (634 aa).

Residues His74 and 115 to 117 (AHS) each bind thiamine diphosphate. Position 146 (Asp146) interacts with Mg(2+). Residues 147-148 (GA), Asn176, Tyr283, and Glu365 each bind thiamine diphosphate. Asn176 contacts Mg(2+).

The protein belongs to the transketolase family. DXPS subfamily. As to quaternary structure, homodimer. It depends on Mg(2+) as a cofactor. Requires thiamine diphosphate as cofactor.

It carries out the reaction D-glyceraldehyde 3-phosphate + pyruvate + H(+) = 1-deoxy-D-xylulose 5-phosphate + CO2. It functions in the pathway metabolic intermediate biosynthesis; 1-deoxy-D-xylulose 5-phosphate biosynthesis; 1-deoxy-D-xylulose 5-phosphate from D-glyceraldehyde 3-phosphate and pyruvate: step 1/1. In terms of biological role, catalyzes the acyloin condensation reaction between C atoms 2 and 3 of pyruvate and glyceraldehyde 3-phosphate to yield 1-deoxy-D-xylulose-5-phosphate (DXP). This Burkholderia orbicola (strain MC0-3) protein is 1-deoxy-D-xylulose-5-phosphate synthase.